A 433-amino-acid chain; its full sequence is Serine--tRNA ligase (433 aa).

An L-serine-binding site is contributed by T235 to E237. R266–E268 contacts ATP. E289 is an L-serine binding site. E353–S356 contacts ATP. S388 serves as a coordination point for L-serine.

It belongs to the class-II aminoacyl-tRNA synthetase family. Type-1 seryl-tRNA synthetase subfamily. In terms of assembly, homodimer. The tRNA molecule binds across the dimer.

It localises to the cytoplasm. The enzyme catalyses tRNA(Ser) + L-serine + ATP = L-seryl-tRNA(Ser) + AMP + diphosphate + H(+). The catalysed reaction is tRNA(Sec) + L-serine + ATP = L-seryl-tRNA(Sec) + AMP + diphosphate + H(+). It participates in aminoacyl-tRNA biosynthesis; selenocysteinyl-tRNA(Sec) biosynthesis; L-seryl-tRNA(Sec) from L-serine and tRNA(Sec): step 1/1. Functionally, catalyzes the attachment of serine to tRNA(Ser). Is also able to aminoacylate tRNA(Sec) with serine, to form the misacylated tRNA L-seryl-tRNA(Sec), which will be further converted into selenocysteinyl-tRNA(Sec). In Burkholderia lata (strain ATCC 17760 / DSM 23089 / LMG 22485 / NCIMB 9086 / R18194 / 383), this protein is Serine--tRNA ligase.